Here is a 203-residue protein sequence, read N- to C-terminus: Outer-membrane lipoprotein carrier protein (203 aa).

Residues 1 to 21 form the signal peptide; it reads MKKIAITCALLSSLVASSVWA.

Belongs to the LolA family. In terms of assembly, monomer.

It is found in the periplasm. In terms of biological role, participates in the translocation of lipoproteins from the inner membrane to the outer membrane. Only forms a complex with a lipoprotein if the residue after the N-terminal Cys is not an aspartate (The Asp acts as a targeting signal to indicate that the lipoprotein should stay in the inner membrane). This is Outer-membrane lipoprotein carrier protein from Escherichia coli O139:H28 (strain E24377A / ETEC).